We begin with the raw amino-acid sequence, 217 residues long: Phosphatidylserine decarboxylase proenzyme (217 aa).

S187 (schiff-base intermediate with substrate; via pyruvic acid) is an active-site residue. The residue at position 187 (S187) is a Pyruvic acid (Ser); by autocatalysis.

Belongs to the phosphatidylserine decarboxylase family. PSD-A subfamily. Heterodimer of a large membrane-associated beta subunit and a small pyruvoyl-containing alpha subunit. Pyruvate serves as cofactor. Is synthesized initially as an inactive proenzyme. Formation of the active enzyme involves a self-maturation process in which the active site pyruvoyl group is generated from an internal serine residue via an autocatalytic post-translational modification. Two non-identical subunits are generated from the proenzyme in this reaction, and the pyruvate is formed at the N-terminus of the alpha chain, which is derived from the carboxyl end of the proenzyme. The post-translation cleavage follows an unusual pathway, termed non-hydrolytic serinolysis, in which the side chain hydroxyl group of the serine supplies its oxygen atom to form the C-terminus of the beta chain, while the remainder of the serine residue undergoes an oxidative deamination to produce ammonia and the pyruvoyl prosthetic group on the alpha chain.

The protein localises to the cell membrane. The catalysed reaction is a 1,2-diacyl-sn-glycero-3-phospho-L-serine + H(+) = a 1,2-diacyl-sn-glycero-3-phosphoethanolamine + CO2. It functions in the pathway phospholipid metabolism; phosphatidylethanolamine biosynthesis; phosphatidylethanolamine from CDP-diacylglycerol: step 2/2. In terms of biological role, catalyzes the formation of phosphatidylethanolamine (PtdEtn) from phosphatidylserine (PtdSer). The sequence is that of Phosphatidylserine decarboxylase proenzyme from Thermobifida fusca (strain YX).